The primary structure comprises 462 residues: GTPase Der (462 aa).

2 EngA-type G domains span residues 2 to 164 (QKVI…EEKV) and 198 to 369 (IRVG…KNYT). Residues 8–15 (GKPNVGKS), 55–59 (DSGGL), 116–119 (NKID), 204–211 (GRVNVGKS), 251–255 (DTAGI), and 315–318 (NKWD) contribute to the GTP site. The region spanning 370–454 (QKIQTSKLNE…PIVLIPKKRG (85 aa)) is the KH-like domain.

The protein belongs to the TRAFAC class TrmE-Era-EngA-EngB-Septin-like GTPase superfamily. EngA (Der) GTPase family. Associates with the 50S ribosomal subunit.

In terms of biological role, GTPase that plays an essential role in the late steps of ribosome biogenesis. This Campylobacter concisus (strain 13826) protein is GTPase Der.